A 1247-amino-acid chain; its full sequence is Respiratory nitrate reductase 1 alpha chain (1247 aa).

The region spanning 43–107 (DKIVRSTHGV…SYSWYLYSAN (65 aa)) is the 4Fe-4S Mo/W bis-MGD-type domain. Residues His50, Cys54, Cys58, and Cys93 each contribute to the [4Fe-4S] cluster site. Mo-bis(molybdopterin guanine dinucleotide) is bound at residue Asp223.

The protein belongs to the prokaryotic molybdopterin-containing oxidoreductase family. As to quaternary structure, dimer of heterotrimers each composed of an alpha, a beta and a gamma chain. Alpha and beta are catalytic chains; gamma chains are involved in binding the enzyme complex to the cytoplasmic membrane. Interacts with the NarJ chaperone. It depends on [4Fe-4S] cluster as a cofactor. Mo-bis(molybdopterin guanine dinucleotide) is required as a cofactor.

It localises to the cell membrane. The enzyme catalyses nitrate + a quinol = a quinone + nitrite + H2O. In terms of biological role, the nitrate reductase enzyme complex allows E.coli to use nitrate as an electron acceptor during anaerobic growth. The alpha chain is the actual site of nitrate reduction. The sequence is that of Respiratory nitrate reductase 1 alpha chain (narG) from Escherichia coli (strain K12).